Reading from the N-terminus, the 350-residue chain is Phenylalanine--tRNA ligase alpha subunit (350 aa).

Glu-271 lines the Mg(2+) pocket.

The protein belongs to the class-II aminoacyl-tRNA synthetase family. Phe-tRNA synthetase alpha subunit type 1 subfamily. As to quaternary structure, tetramer of two alpha and two beta subunits. Mg(2+) serves as cofactor.

Its subcellular location is the cytoplasm. It carries out the reaction tRNA(Phe) + L-phenylalanine + ATP = L-phenylalanyl-tRNA(Phe) + AMP + diphosphate + H(+). In Acidovorax ebreus (strain TPSY) (Diaphorobacter sp. (strain TPSY)), this protein is Phenylalanine--tRNA ligase alpha subunit.